Here is a 500-residue protein sequence, read N- to C-terminus: Protein SLENDER RICE1-LIKE 2 (500 aa).

One can recognise a GRAS domain in the interval 68–454; it reads KELEKMALRS…QRLYSASAWR (387 aa). Residues 75-135 form a leucine repeat I (LRI) region; the sequence is LRSVNLMVTC…DALAERLFPA (61 aa). The interval 154 to 219 is VHIID; sequence FRGFYEAGPY…GGPPFLRITG (66 aa). The VHIID signature appears at 185-189; the sequence is VHVID. The tract at residues 233–265 is leucine repeat II (LRII); it reads DVGLRLAEFARSCSVPFAFRGIAADQLDGLRPW. Residues 275–376 form a PFYRE region; it reads VAINSVLQLH…EAYLQGEIAD (102 aa). The LXXLL motif motif lies at 283-287; sequence LHRLL. Positions 379 to 454 are SAW; the sequence is SREGSSRVER…QRLYSASAWR (76 aa). The tract at residues 466 to 500 is disordered; it reads SGAADAMEESQNSNTNGGGGGSSGGGHGALNQIMQ. Positions 481–493 are enriched in gly residues; it reads NGGGGGSSGGGHG.

It belongs to the GRAS family. Expressed at low levels in leaf blades, leaf sheaths, rachis and flowers. Expressed in the embryo of immature seeds.

It is found in the nucleus. Probable transcriptional regulator that acts as a repressor of the gibberellin (GA) signaling pathway. Its repressive activity is weaker than that of SLR1. Its overexpression prevents the GA signaling pathway and induces a dwarf phenotype in Arabidopsis thaliana plants. This Oryza sativa subsp. japonica (Rice) protein is Protein SLENDER RICE1-LIKE 2.